The following is a 174-amino-acid chain: MANRRKNPRKVEKETDWQERVVQIRRVSKVVKGGKKLSFRAIVVVGNERGQVGVGVGKAADVIGAVRKGVADGKKHLIDVPITKSNSIPHPTFGEGGAARVMIRPAAPGTGVIAGGSVRTVLELAGVRNVLAKQLGSSNPLNNARAALEALAALRTFQEVAEEREIPIENLYSK.

Positions Trp-17–Val-80 constitute an S5 DRBM domain.

The protein belongs to the universal ribosomal protein uS5 family. As to quaternary structure, part of the 30S ribosomal subunit. Contacts proteins S4 and S8.

With S4 and S12 plays an important role in translational accuracy. In terms of biological role, located at the back of the 30S subunit body where it stabilizes the conformation of the head with respect to the body. The sequence is that of Small ribosomal subunit protein uS5 from Thermosynechococcus vestitus (strain NIES-2133 / IAM M-273 / BP-1).